Reading from the N-terminus, the 191-residue chain is Holliday junction branch migration complex subunit RuvA (191 aa).

Positions 1 to 64 (MIGRLSGVLL…EDAHILFGFG (64 aa)) are domain I. A domain II region spans residues 65 to 137 (TNEERNVFKQ…LKGKLGADLG (73 aa)). The interval 137–141 (GVAGA) is flexible linker. Positions 142–191 (VATDATSDILNALLALGYSDKEAMLALKQVPAGTGVSDGIKLALKSLSKA) are domain III.

The protein belongs to the RuvA family. Homotetramer. Forms an RuvA(8)-RuvB(12)-Holliday junction (HJ) complex. HJ DNA is sandwiched between 2 RuvA tetramers; dsDNA enters through RuvA and exits via RuvB. An RuvB hexamer assembles on each DNA strand where it exits the tetramer. Each RuvB hexamer is contacted by two RuvA subunits (via domain III) on 2 adjacent RuvB subunits; this complex drives branch migration. In the full resolvosome a probable DNA-RuvA(4)-RuvB(12)-RuvC(2) complex forms which resolves the HJ.

Its subcellular location is the cytoplasm. The RuvA-RuvB-RuvC complex processes Holliday junction (HJ) DNA during genetic recombination and DNA repair, while the RuvA-RuvB complex plays an important role in the rescue of blocked DNA replication forks via replication fork reversal (RFR). RuvA specifically binds to HJ cruciform DNA, conferring on it an open structure. The RuvB hexamer acts as an ATP-dependent pump, pulling dsDNA into and through the RuvAB complex. HJ branch migration allows RuvC to scan DNA until it finds its consensus sequence, where it cleaves and resolves the cruciform DNA. This Janthinobacterium sp. (strain Marseille) (Minibacterium massiliensis) protein is Holliday junction branch migration complex subunit RuvA.